The sequence spans 258 residues: Eukaryotic translation initiation factor 3 subunit J (258 aa).

Positions 1–11 (MAAAAAAAGDS) are enriched in low complexity. The interval 1-108 (MAAAAAAAGD…LEEPEEPKVL (108 aa)) is disordered. Ala2 bears the N-acetylalanine mark. Residues 2–69 (AAAAAAAGDS…KEEAEVKPEV (68 aa)) form a sufficient for interaction with EIF3B region. Residues Ser11, Ser13, and Ser20 each carry the phosphoserine modification. The span at 40 to 59 (EGEDEDEDVKDNWDDDDDEK) shows a compositional bias: acidic residues. Residues 60-106 (KEEAEVKPEVKISEKKKIAEKIKEKERQQKKRQEEIKKRLEEPEEPK) are compositionally biased toward basic and acidic residues. Positions 70–135 (KISEKKKIAE…ESDLELAKET (66 aa)) form a coiled coil. Residue Lys106 forms a Glycyl lysine isopeptide (Lys-Gly) (interchain with G-Cter in SUMO2) linkage. Thr109 carries the phosphothreonine modification. At Ser127 the chain carries Phosphoserine. Positions 217 to 238 (SKAKKKKKGVVPGGGLKATMKD) are disordered. The tract at residues 243–258 (YGGYDGGYVQDYEDFM) is promotes stable association with the 40S ribosome. Tyr254 carries the phosphotyrosine modification.

In terms of assembly, component of the eukaryotic translation initiation factor 3 (eIF-3) complex, which is composed of 13 subunits: EIF3A, EIF3B, EIF3C, EIF3D, EIF3E, EIF3F, EIF3G, EIF3H, EIF3I, EIF3J, EIF3K, EIF3L and EIF3M. The eIF-3 complex appears to include 3 stable modules: module A is composed of EIF3A, EIF3B, EIF3G and EIF3I; module B is composed of EIF3F, EIF3H, and EIF3M; and module C is composed of EIF3C, EIF3D, EIF3E, EIF3K and EIF3L. EIF3C of module C binds EIF3B of module A and EIF3H of module B, thereby linking the three modules. EIF3J is a labile subunit that binds to the eIF-3 complex via EIF3B. The eIF-3 complex interacts with RPS6KB1 under conditions of nutrient depletion. Mitogenic stimulation leads to binding and activation of a complex composed of MTOR and RPTOR, leading to phosphorylation and release of RPS6KB1 and binding of EIF4B to eIF-3. In terms of processing, phosphorylated. Phosphorylation is enhanced upon serum stimulation.

The protein localises to the cytoplasm. In terms of biological role, component of the eukaryotic translation initiation factor 3 (eIF-3) complex, which is required for several steps in the initiation of protein synthesis. The eIF-3 complex associates with the 40S ribosome and facilitates the recruitment of eIF-1, eIF-1A, eIF-2:GTP:methionyl-tRNAi and eIF-5 to form the 43S pre-initiation complex (43S PIC). The eIF-3 complex stimulates mRNA recruitment to the 43S PIC and scanning of the mRNA for AUG recognition. The eIF-3 complex is also required for disassembly and recycling of post-termination ribosomal complexes and subsequently prevents premature joining of the 40S and 60S ribosomal subunits prior to initiation. The eIF-3 complex specifically targets and initiates translation of a subset of mRNAs involved in cell proliferation, including cell cycling, differentiation and apoptosis, and uses different modes of RNA stem-loop binding to exert either translational activation or repression. This is Eukaryotic translation initiation factor 3 subunit J from Homo sapiens (Human).